The primary structure comprises 153 residues: Proline-rich membrane anchor 1 (153 aa).

The first 35 residues, 1–35 (MLLRDLVLRRGCCWSSLLLHCALHPLWGFVQVTHG), serve as a signal peptide directing secretion. Residues 36–92 (EPQKSCSKVTDSCRHVCQCRPPPPLPPPPPPPPPPRLLSAPAPNSTSCPTEESWWSG) are Extracellular-facing. The region spanning 56–70 (PPPPLPPPPPPPPPP) is the PRAD domain. The segment covering 59–71 (PLPPPPPPPPPPR) has biased composition (pro residues). Residues 59–79 (PLPPPPPPPPPPRLLSAPAPN) form a disordered region. Asn79 carries an N-linked (GlcNAc...) asparagine glycan. A helical transmembrane segment spans residues 93 to 113 (LVIIIAVCCASLVFLTVLVII). At 114-153 (CYKAIKRKPLRKDENGTSVAEYPMSASQSNKGVDVNNAVV) the chain is on the cytoplasmic side.

As to quaternary structure, interacts with ACHE, probably through disulfide bonds.

The protein resides in the cell membrane. The protein localises to the cell junction. It is found in the synapse. Required to anchor acetylcholinesterase (ACHE) to the basal lamina of the neuromuscular junction and to the membrane of neuronal synapses in brain. Also able to organize ACHE into tetramers. This chain is Proline-rich membrane anchor 1 (PRIMA1), found in Homo sapiens (Human).